We begin with the raw amino-acid sequence, 118 residues long: Large ribosomal subunit protein bL19 (118 aa).

It belongs to the bacterial ribosomal protein bL19 family.

Functionally, this protein is located at the 30S-50S ribosomal subunit interface and may play a role in the structure and function of the aminoacyl-tRNA binding site. The protein is Large ribosomal subunit protein bL19 of Campylobacter curvus (strain 525.92).